Here is a 226-residue protein sequence, read N- to C-terminus: 6-carboxyhexanoate--CoA ligase (226 aa).

It belongs to the BioW family. As to quaternary structure, homodimer. It depends on Mg(2+) as a cofactor.

The enzyme catalyses heptanedioate + ATP + CoA = 6-carboxyhexanoyl-CoA + AMP + diphosphate. The protein operates within metabolic intermediate metabolism; pimeloyl-CoA biosynthesis; pimeloyl-CoA from pimelate: step 1/1. Its function is as follows. Catalyzes the transformation of pimelate into pimeloyl-CoA with concomitant hydrolysis of ATP to AMP. This chain is 6-carboxyhexanoate--CoA ligase, found in Methanocaldococcus infernus (strain DSM 11812 / JCM 15783 / ME).